A 616-amino-acid polypeptide reads, in one-letter code: Dihydroxy-acid dehydratase 1 (616 aa).

Aspartate 81 contributes to the Mg(2+) binding site. Position 122 (cysteine 122) interacts with [2Fe-2S] cluster. Positions 123 and 124 each coordinate Mg(2+). Lysine 124 bears the N6-carboxylysine mark. Cysteine 195 is a binding site for [2Fe-2S] cluster. Glutamate 491 is a Mg(2+) binding site. Residue serine 517 is the Proton acceptor of the active site.

This sequence belongs to the IlvD/Edd family. As to quaternary structure, homodimer. [2Fe-2S] cluster is required as a cofactor. It depends on Mg(2+) as a cofactor.

The enzyme catalyses (2R)-2,3-dihydroxy-3-methylbutanoate = 3-methyl-2-oxobutanoate + H2O. It catalyses the reaction (2R,3R)-2,3-dihydroxy-3-methylpentanoate = (S)-3-methyl-2-oxopentanoate + H2O. It participates in amino-acid biosynthesis; L-isoleucine biosynthesis; L-isoleucine from 2-oxobutanoate: step 3/4. It functions in the pathway amino-acid biosynthesis; L-valine biosynthesis; L-valine from pyruvate: step 3/4. Functionally, functions in the biosynthesis of branched-chain amino acids. Catalyzes the dehydration of (2R,3R)-2,3-dihydroxy-3-methylpentanoate (2,3-dihydroxy-3-methylvalerate) into 2-oxo-3-methylpentanoate (2-oxo-3-methylvalerate) and of (2R)-2,3-dihydroxy-3-methylbutanoate (2,3-dihydroxyisovalerate) into 2-oxo-3-methylbutanoate (2-oxoisovalerate), the penultimate precursor to L-isoleucine and L-valine, respectively. In Bradyrhizobium diazoefficiens (strain JCM 10833 / BCRC 13528 / IAM 13628 / NBRC 14792 / USDA 110), this protein is Dihydroxy-acid dehydratase 1.